The following is a 282-amino-acid chain: ATP synthase gamma chain (282 aa).

Belongs to the ATPase gamma chain family. In terms of assembly, F-type ATPases have 2 components, CF(1) - the catalytic core - and CF(0) - the membrane proton channel. CF(1) has five subunits: alpha(3), beta(3), gamma(1), delta(1), epsilon(1). CF(0) has three main subunits: a, b and c.

Its subcellular location is the cell membrane. Functionally, produces ATP from ADP in the presence of a proton gradient across the membrane. The gamma chain is believed to be important in regulating ATPase activity and the flow of protons through the CF(0) complex. The protein is ATP synthase gamma chain of Clostridium botulinum (strain Kyoto / Type A2).